The primary structure comprises 369 residues: Peptide chain release factor 1 (369 aa).

Glutamine 234 bears the N5-methylglutamine mark.

This sequence belongs to the prokaryotic/mitochondrial release factor family. In terms of processing, methylated by PrmC. Methylation increases the termination efficiency of RF1.

The protein localises to the cytoplasm. Functionally, peptide chain release factor 1 directs the termination of translation in response to the peptide chain termination codons UAG and UAA. This Kocuria rhizophila (strain ATCC 9341 / DSM 348 / NBRC 103217 / DC2201) protein is Peptide chain release factor 1.